Reading from the N-terminus, the 101-residue chain is Large ribosomal subunit protein uL24 (101 aa).

It belongs to the universal ribosomal protein uL24 family. As to quaternary structure, part of the 50S ribosomal subunit.

Functionally, one of two assembly initiator proteins, it binds directly to the 5'-end of the 23S rRNA, where it nucleates assembly of the 50S subunit. In terms of biological role, one of the proteins that surrounds the polypeptide exit tunnel on the outside of the subunit. This is Large ribosomal subunit protein uL24 from Streptococcus agalactiae serotype III (strain NEM316).